Reading from the N-terminus, the 427-residue chain is Trigger factor (427 aa).

One can recognise a PPIase FKBP-type domain in the interval 163 to 248 (GDTVVIDFVG…IHEVKAKEVP (86 aa)).

It belongs to the FKBP-type PPIase family. Tig subfamily.

The protein localises to the cytoplasm. The catalysed reaction is [protein]-peptidylproline (omega=180) = [protein]-peptidylproline (omega=0). Involved in protein export. Acts as a chaperone by maintaining the newly synthesized protein in an open conformation. Functions as a peptidyl-prolyl cis-trans isomerase. The protein is Trigger factor of Streptococcus pneumoniae (strain ATCC 700669 / Spain 23F-1).